Consider the following 568-residue polypeptide: Phosphoprotein (568 aa).

A disordered region spans residues 1–25; the sequence is MDQDAFFSERDPEAEGETPRKQESL. Positions 7–24 are enriched in basic and acidic residues; the sequence is FSERDPEAEGETPRKQES. Positions 33–41 are N0 binding; the sequence is DVVLSYKPT. The disordered stretch occupies residues 55-322; that stretch reads DNSKENKPSC…TTANEEGTSN (268 aa). Composition is skewed to basic and acidic residues over residues 56 to 105, 132 to 144, 151 to 167, and 175 to 190; these read NSKE…HARI, RNTR…PNER, PTDE…KREE, and EEVR…REGR. Residues 191–216 are compositionally biased toward polar residues; the sequence is TNNNGRSMETSSTHSTRITDVITNPS. The segment covering 239-265 has biased composition (basic and acidic residues); it reads TRSERTQNSELHKSTSEDSSNLEDHNT. A compositionally biased stretch (low complexity) spans 294–304; it reads YTTNNANNNTK. Residues 344 to 411 form a multimerization region; it reads FELSRSASHV…SSRDLHKRFS (68 aa). Residues 387 to 416 are a coiled coil; sequence EENRTLLKQIQEEIDSSRDLHKRFSEYQKE. Residues 412–445 form a l protein binding region; the sequence is EYQKEQNSLMMANLSTLHIITDRGGKTGDPSDTT. Disordered stretches follow at residues 434–455 and 494–513; these read RGGK…TKGK and VLEE…LIPS. Over residues 441–450 the composition is skewed to polar residues; sequence PSDTTRSPSV. The segment at 479–568 is interaction with the nucleocapsid (N-RNA); sequence DLIREDELRD…FEEDIDSLTN (90 aa).

The protein belongs to the respirovirus P protein family. Homotetramer. Interacts (via multimerization domain) with polymerase L; this interaction forms the polymerase complex. Interacts (via N-terminus) with N0; this interaction allows P to chaperon N0 before encapsidation and form the N-P complex. Interacts (via C-terminus) with N-RNA template; this interaction positions the polymerase on the template.

Essential cofactor of the RNA polymerase L that plays a central role in the transcription and replication by forming the polymerase complex with RNA polymerase L and recruiting L to the genomic N-RNA template for RNA synthesis. Also plays a central role in the encapsidation of nascent RNA chains by forming the encapsidation complex with the nucleocapsid protein N (N-P complex). Acts as a chaperone for newly synthesized free N protein, so-called N0, allowing encapsidation of nascent RNA chains during replication. The nucleoprotein protein N prevents excessive phosphorylation of P, which leads to down-regulation of viral transcription/ replication. Participates, together with N, in the formation of viral factories (viroplasms), which are large inclusions in the host cytoplasm where replication takes place. Recruits host PI4KB and remodel the host endoplasmic reticulum membrane to form viral replication factories. This is Phosphoprotein (P/C) from Human parainfluenza 1 virus (strain CI-5/73) (HPIV-1).